We begin with the raw amino-acid sequence, 313 residues long: Bifunctional pinoresinol-lariciresinol reductase 1 (313 aa).

NADP(+) is bound by residues Gly11–Gly17, Arg36, and Lys45. Catalysis depends on Lys138, which acts as the Proton acceptor. Arg142 contacts NADP(+). A substrate-binding site is contributed by His271.

It belongs to the NmrA-type oxidoreductase family. Isoflavone reductase subfamily. Dimer.

The enzyme catalyses (+)-lariciresinol + NADP(+) = (+)-pinoresinol + NADPH + H(+). It catalyses the reaction (-)-lariciresinol + NADP(+) = (-)-pinoresinol + NADPH + H(+). It carries out the reaction (+)-secoisolariciresinol + NADP(+) = (-)-lariciresinol + NADPH + H(+). Reductase involved in lignan biosynthesis. Catalyzes the enantioselective sequential conversion of (-)-pinoresinol into (-)-lariciresinol and of (-)-lariciresinol into (+)-secoisolariciresinol. Can also convert with a lower efficiency (+)-pinoresinol into (+)-lariciresinol, but not (+)-lariciresinol into (-)-secoisolariciresinol. Abstracts the 4R-hydride from the NADPH cofactor during catalysis. The protein is Bifunctional pinoresinol-lariciresinol reductase 1 (PLR_Tp1) of Thuja plicata (Western red-cedar).